A 422-amino-acid polypeptide reads, in one-letter code: Histidine--tRNA ligase (422 aa).

It belongs to the class-II aminoacyl-tRNA synthetase family. In terms of assembly, homodimer.

It is found in the cytoplasm. It catalyses the reaction tRNA(His) + L-histidine + ATP = L-histidyl-tRNA(His) + AMP + diphosphate + H(+). In Vibrio campbellii (strain ATCC BAA-1116), this protein is Histidine--tRNA ligase.